Consider the following 511-residue polypeptide: L-arabinose isomerase (511 aa).

4 residues coordinate Mn(2+): Glu-316, Glu-343, His-360, and His-459.

It belongs to the arabinose isomerase family. Mn(2+) serves as cofactor.

The enzyme catalyses beta-L-arabinopyranose = L-ribulose. It participates in carbohydrate degradation; L-arabinose degradation via L-ribulose; D-xylulose 5-phosphate from L-arabinose (bacterial route): step 1/3. Its function is as follows. Catalyzes the conversion of L-arabinose to L-ribulose. The protein is L-arabinose isomerase of Arthrobacter sp. (strain FB24).